Reading from the N-terminus, the 254-residue chain is MAAYKLVLIRHGESAWNLENRFSGWYDADLSPAGHEEAKRGGQALRDAGYEFDICFTSVQKRAIRTLWTVLDAIDQMWLPVVRTWRLNERHYGGLTGLNKAETAAKHGEAQVKIWRRSYDVPPPPMEPDHPFYSNISKDRRYADLTEDQLPSCESLKDTIARALPFWNEEIVPQIKEGKRVLIAAHGNSLRGIVKHLEGLSEEAIMELNLPTGIPIVYELDKNLKPIKPMQFLGDEETVRKAMEAVAAQGKVKK.

Residues 10–17 (RHGESAWN) and 23–24 (SG) contribute to the substrate site. Histidine 11 (tele-phosphohistidine intermediate) is an active-site residue. A phosphoserine mark is found at serine 14 and serine 23. Position 26 is a phosphotyrosine (tyrosine 26). At serine 31 the chain carries Phosphoserine. Residues arginine 62, 89 to 92 (ERHY), and lysine 100 each bind substrate. Glutamate 89 acts as the Proton donor/acceptor in catalysis. Lysine 106 bears the N6-acetyllysine mark. 116–117 (RR) contributes to the substrate binding site. Serine 118 bears the Phosphoserine mark. Position 187–188 (187–188 (GN)) interacts with substrate. The residue at position 251 (lysine 251) is an N6-acetyllysine; alternate. Lysine 251 carries the N6-succinyllysine; alternate modification. An N6-acetyllysine mark is found at lysine 253 and lysine 254.

Belongs to the phosphoglycerate mutase family. BPG-dependent PGAM subfamily. Homodimer. In terms of processing, acetylated at Lys-253, Lys-253 and Lys-254 under high glucose condition. Acetylation increases catalytic activity. Under glucose restriction SIRT1 levels dramatically increase and it deacetylates the enzyme.

It catalyses the reaction (2R)-2-phosphoglycerate = (2R)-3-phosphoglycerate. It carries out the reaction (2R)-3-phospho-glyceroyl phosphate = (2R)-2,3-bisphosphoglycerate + H(+). Catalyzes the interconversion of 2-phosphoglycerate and 3-phosphoglyceratea crucial step in glycolysis, by using 2,3-bisphosphoglycerate. Also catalyzes the interconversion of (2R)-2,3-bisphosphoglycerate and (2R)-3-phospho-glyceroyl phosphate. The polypeptide is Phosphoglycerate mutase 1 (Mus musculus (Mouse)).